The chain runs to 468 residues: ATP synthase subunit beta (468 aa).

ATP is bound at residue 155 to 162 (GGAGVGKT).

It belongs to the ATPase alpha/beta chains family. In terms of assembly, F-type ATPases have 2 components, CF(1) - the catalytic core - and CF(0) - the membrane proton channel. CF(1) has five subunits: alpha(3), beta(3), gamma(1), delta(1), epsilon(1). CF(0) has three main subunits: a(1), b(2) and c(9-12). The alpha and beta chains form an alternating ring which encloses part of the gamma chain. CF(1) is attached to CF(0) by a central stalk formed by the gamma and epsilon chains, while a peripheral stalk is formed by the delta and b chains.

It localises to the cell membrane. The enzyme catalyses ATP + H2O + 4 H(+)(in) = ADP + phosphate + 5 H(+)(out). In terms of biological role, produces ATP from ADP in the presence of a proton gradient across the membrane. The catalytic sites are hosted primarily by the beta subunits. The sequence is that of ATP synthase subunit beta from Streptococcus thermophilus (strain CNRZ 1066).